A 341-amino-acid polypeptide reads, in one-letter code: L-sulfolactate dehydrogenase (341 aa).

The protein belongs to the LDH2/MDH2 oxidoreductase family.

The protein resides in the cytoplasm. The catalysed reaction is a (2S)-2-hydroxycarboxylate + NAD(+) = a 2-oxocarboxylate + NADH + H(+). It functions in the pathway cofactor biosynthesis; coenzyme M biosynthesis; sulfoacetaldehyde from phosphoenolpyruvate and sulfite: step 3/4. Its pathway is cofactor biosynthesis; 5,6,7,8-tetrahydromethanopterin biosynthesis. In terms of biological role, catalyzes the reduction of sulfopyruvate to (R)-sulfolactate. Involved in the biosynthesis of both coenzyme M (with (R)-sulfolactate) and methanopterin (with alpha-ketoglutarate). This chain is L-sulfolactate dehydrogenase (comC), found in Methanothermobacter thermautotrophicus (strain ATCC 29096 / DSM 1053 / JCM 10044 / NBRC 100330 / Delta H) (Methanobacterium thermoautotrophicum).